The following is a 248-amino-acid chain: Transcription factor MYB1 (248 aa).

2 HTH myb-type domains span residues K9–L61 and R62–V116. 2 consecutive DNA-binding regions (H-T-H motif) follow at residues W37–L61 and W89–L112. The tract at residues D118–N144 is disordered.

Its subcellular location is the nucleus. Transcription activator involved in the spatiotemporal regulation of flavonoid biosynthesis specifically in the corms of Montbretia. Activates the promoters of enzymes involved in the biosynthesis of the flavonol kaempferol and the flavonol-glycoside kaempferol-rhamnoside. This Crocosmia x crocosmiiflora (Montbretia) protein is Transcription factor MYB1.